A 214-amino-acid chain; its full sequence is Germin-like protein (214 aa).

The first 22 residues, 1-22, serve as a signal peptide directing secretion; it reads MVMMRIFFFLFLLAFPVFTANA. An intrachain disulfide couples Cys-28 to Cys-44. Residues 58–204 form the Cupin type-1 domain; the sequence is SGLAKPGNTT…TTCLDEATIK (147 aa). The Mn(2+) site is built by His-106, His-108, and Glu-113.

The protein belongs to the germin family. Oligomer (believed to be a pentamer but probably hexamer). As to expression, cotyledons and leaves.

The protein localises to the secreted. The protein resides in the extracellular space. It is found in the apoplast. In Ipomoea nil (Japanese morning glory), this protein is Germin-like protein (GLP).